A 230-amino-acid chain; its full sequence is Small ribosomal subunit protein uS3 (230 aa).

The KH type-2 domain occupies 39-107; it reads VRKYLADKLQ…PAQINIAEIR (69 aa).

Belongs to the universal ribosomal protein uS3 family. As to quaternary structure, part of the 30S ribosomal subunit. Forms a tight complex with proteins S10 and S14.

Functionally, binds the lower part of the 30S subunit head. Binds mRNA in the 70S ribosome, positioning it for translation. This Shewanella oneidensis (strain ATCC 700550 / JCM 31522 / CIP 106686 / LMG 19005 / NCIMB 14063 / MR-1) protein is Small ribosomal subunit protein uS3.